We begin with the raw amino-acid sequence, 63 residues long: Antimicrobial peptide 2 (63 aa).

The signal sequence occupies residues 1-27; sequence MAKVPIAFLKFVIVLILFIAMSGMIEA. 3 cysteine pairs are disulfide-bonded: C28–C45, C35–C49, and C44–C60.

It belongs to the AMP family. Homodimer. Seed specific.

Its subcellular location is the secreted. Its function is as follows. Possesses antifungal activity and is also active on two tested Gram-positive bacteria but is non-toxic for Gram-negative bacteria and cultured human cells. In Mirabilis jalapa (Garden four-o'clock), this protein is Antimicrobial peptide 2 (AMP2).